A 305-amino-acid polypeptide reads, in one-letter code: Glycerol-3-phosphate dehydrogenase [NAD(P)+] (305 aa).

NADPH-binding residues include phenylalanine 10, arginine 29, and lysine 87. Residues lysine 87, glycine 115, and serine 117 each contribute to the sn-glycerol 3-phosphate site. Alanine 119 contributes to the NADPH binding site. Residues lysine 170, aspartate 223, serine 233, arginine 234, and asparagine 235 each contribute to the sn-glycerol 3-phosphate site. The active-site Proton acceptor is lysine 170. Arginine 234 lines the NADPH pocket. Residue glutamate 255 coordinates NADPH.

It belongs to the NAD-dependent glycerol-3-phosphate dehydrogenase family.

It is found in the cytoplasm. The enzyme catalyses sn-glycerol 3-phosphate + NAD(+) = dihydroxyacetone phosphate + NADH + H(+). The catalysed reaction is sn-glycerol 3-phosphate + NADP(+) = dihydroxyacetone phosphate + NADPH + H(+). It functions in the pathway membrane lipid metabolism; glycerophospholipid metabolism. Catalyzes the reduction of the glycolytic intermediate dihydroxyacetone phosphate (DHAP) to sn-glycerol 3-phosphate (G3P), the key precursor for phospholipid synthesis. The protein is Glycerol-3-phosphate dehydrogenase [NAD(P)+] of Cereibacter sphaeroides (strain ATCC 17023 / DSM 158 / JCM 6121 / CCUG 31486 / LMG 2827 / NBRC 12203 / NCIMB 8253 / ATH 2.4.1.) (Rhodobacter sphaeroides).